A 197-amino-acid chain; its full sequence is Xanthine phosphoribosyltransferase (197 aa).

2 residues coordinate xanthine: Leu-20 and Asn-27. Residue 128 to 132 participates in 5-phospho-alpha-D-ribose 1-diphosphate binding; it reads ANGQA. Residue Lys-156 coordinates xanthine.

The protein belongs to the purine/pyrimidine phosphoribosyltransferase family. Xpt subfamily. As to quaternary structure, homodimer.

It localises to the cytoplasm. The catalysed reaction is XMP + diphosphate = xanthine + 5-phospho-alpha-D-ribose 1-diphosphate. It participates in purine metabolism; XMP biosynthesis via salvage pathway; XMP from xanthine: step 1/1. Converts the preformed base xanthine, a product of nucleic acid breakdown, to xanthosine 5'-monophosphate (XMP), so it can be reused for RNA or DNA synthesis. This is Xanthine phosphoribosyltransferase from Bacillus cereus (strain ATCC 10987 / NRS 248).